The sequence spans 534 residues: High-affinity nicotinic acid transporter (534 aa).

At 1-130 (MSNKFTMESP…DIHLVGTQYN (130 aa)) the chain is on the extracellular side. Residues 21 to 56 (SPTNDGSEEKPTEVTFQEDEGHDASLHNRSHDKKSE) form a disordered region. S27 bears the Phosphoserine mark. The helical transmembrane segment at 131–151 (TCVTVFFATYVLFDPIGTNLL) threads the bilayer. A topological domain (cytoplasmic) is located at residue K152. Residues 153 to 173 (IMGPPLMMSICLTCFGAISLG) form a helical membrane-spanning segment. Residues 174–187 (TAWVKNYAQLIVVR) lie on the Extracellular side of the membrane. Residues 188-208 (LLLGAFEGMIYPAINMYLSVC) traverse the membrane as a helical segment. The Cytoplasmic segment spans residues 209 to 217 (YRREQYALR). The helical transmembrane segment at 218-238 (FAFVFSAACLSSSFGGLIAYG) threads the bilayer. The Extracellular segment spans residues 239–250 (CSKISGSLKDWQ). A helical membrane pass occupies residues 251-271 (YIYIVEGCISLGFVPFYAFGL). Residues 272 to 323 (SKNLEDSWFFNKEEKEYISERYKTMNTFDPDEKFEWFQVWQAVKDVKTWASA) lie on the Cytoplasmic side of the membrane. K283 participates in a covalent cross-link: Glycyl lysine isopeptide (Lys-Gly) (interchain with G-Cter in ubiquitin). A helical membrane pass occupies residues 324-344 (VALFGIDLTTFGLTVFLPIII). At 345–355 (TSMGFTNVRAQ) the chain is on the extracellular side. Residues 356–376 (LMTVPIYFLTAIVFFICAVWS) form a helical membrane-spanning segment. Residues 377–384 (DRIKLRSP) are Cytoplasmic-facing. Residues 385-405 (FILGACLTTSIGIAIVLGSQV) form a helical membrane-spanning segment. At 406–410 (HGVRY) the chain is on the extracellular side. The chain crosses the membrane as a helical span at residues 411–431 (FGVYILCMGIYVNAACNCLWL). Over 432–444 (SGNTGNYFKRATA) the chain is Cytoplasmic. The helical transmembrane segment at 445 to 465 (LGINLFFGSGSGLVSGQIFVA) threads the bilayer. The Extracellular portion of the chain corresponds to 466-474 (KDKPRYIKG). The chain crosses the membrane as a helical span at residues 475–495 (LSISLAFQVFSIFMTVVQIFL). Topologically, residues 496–534 (YKRENDKKKAIIDRCNELGEPIPYDERLSDKNPEFKYMY) are cytoplasmic.

The protein belongs to the major facilitator superfamily. Allantoate permease family.

The protein localises to the membrane. Involved in the uptake of nicotinic acid. This chain is High-affinity nicotinic acid transporter (TNA1), found in Saccharomyces cerevisiae (strain ATCC 204508 / S288c) (Baker's yeast).